Reading from the N-terminus, the 190-residue chain is ATP synthase subunit C lysine N-methyltransferase (190 aa).

It belongs to the ANT/ATPSC lysine N-methyltransferase family.

It localises to the mitochondrion. The enzyme catalyses L-lysyl-[protein] + 3 S-adenosyl-L-methionine = N(6),N(6),N(6)-trimethyl-L-lysyl-[protein] + 3 S-adenosyl-L-homocysteine + 3 H(+). Mitochondrial protein-lysine N-methyltransferase that trimethylates ATP synthase subunit C. Trimethylation is required for proper incorporation of the C subunit into the ATP synthase complex and mitochondrial respiration. This Caenorhabditis elegans protein is ATP synthase subunit C lysine N-methyltransferase.